Reading from the N-terminus, the 166-residue chain is MASVARSSALLKQVAAQQSVAANGLRVAAFHTTSRKSLLPPPPQRIEGTVNDPVEVPPPSPSHGSYHWTFDRVVAAGLIPLTVAPFAAGSLNPTMDAVLAATILIHSHTGFGNIIVDYVPSKRVPKARKVFTWGLNAATVLVGLALYEFETTDVGLTETIKRVWKA.

Residues 1-65 (MASVARSSAL…VPPPSPSHGS (65 aa)) lie on the Mitochondrial matrix side of the membrane. The chain crosses the membrane as a helical span at residues 66-87 (YHWTFDRVVAAGLIPLTVAPFA). Residues 88-94 (AGSLNPT) are Mitochondrial intermembrane-facing. A helical transmembrane segment spans residues 95–115 (MDAVLAATILIHSHTGFGNII). Position 106 (H106) interacts with heme. Over 116–124 (VDYVPSKRV) the chain is Mitochondrial matrix. A ubiquinone is bound at residue Y118. A helical membrane pass occupies residues 125 to 149 (PKARKVFTWGLNAATVLVGLALYEF). Residues 150–166 (ETTDVGLTETIKRVWKA) are Mitochondrial intermembrane-facing.

The protein belongs to the CybS family. As to quaternary structure, forms part of complex II containing four subunits: a flavoprotein (FP), an iron-sulfur protein (IP) and a cytochrome b composed of a large and a small subunit.

The protein localises to the mitochondrion inner membrane. Its pathway is carbohydrate metabolism; tricarboxylic acid cycle. Its function is as follows. Membrane-anchoring subunit of succinate dehydrogenase (SDH) that is involved in complex II of the mitochondrial electron transport chain and is responsible for transferring electrons from succinate to ubiquinone (coenzyme Q). The protein is Succinate dehydrogenase [ubiquinone] cytochrome b small subunit, mitochondrial of Neurospora crassa (strain ATCC 24698 / 74-OR23-1A / CBS 708.71 / DSM 1257 / FGSC 987).